A 174-amino-acid polypeptide reads, in one-letter code: Profilin (174 aa).

The segment at 4-9 (YSWENF) is pro-rich sequence-binding. The Plasmodium-specific profilin mini-domain motif lies at 47–53 (FDKWSLF). Actin-binding regions lie at residues 99–111 (KYQFINMDKGLEY) and 151–155 (RGNSK).

The protein belongs to the profilin family. Binds actin.

The protein localises to the cytoplasm. It is found in the cytoskeleton. Functionally, essential for the invasive blood stages of the parasite. Binds to proline rich sequences in various regulatory formin-like proteins and also to membrane phospholipids. Binds to actin and affects the structure of the cytoskeleton. Weakly sequesters actin monomers. The chain is Profilin from Plasmodium berghei.